The primary structure comprises 193 residues: Small ribosomal subunit protein eS1 (193 aa).

It belongs to the eukaryotic ribosomal protein eS1 family.

The sequence is that of Small ribosomal subunit protein eS1 from Methanobrevibacter smithii (strain ATCC 35061 / DSM 861 / OCM 144 / PS).